The chain runs to 180 residues: Large ribosomal subunit protein uL6 (180 aa).

This sequence belongs to the universal ribosomal protein uL6 family. Part of the 50S ribosomal subunit.

This protein binds to the 23S rRNA, and is important in its secondary structure. It is located near the subunit interface in the base of the L7/L12 stalk, and near the tRNA binding site of the peptidyltransferase center. This is Large ribosomal subunit protein uL6 from Christiangramia forsetii (strain DSM 17595 / CGMCC 1.15422 / KT0803) (Gramella forsetii).